Here is an 89-residue protein sequence, read N- to C-terminus: Elongation factor 1-beta (89 aa).

This sequence belongs to the EF-1-beta/EF-1-delta family.

In terms of biological role, promotes the exchange of GDP for GTP in EF-1-alpha/GDP, thus allowing the regeneration of EF-1-alpha/GTP that could then be used to form the ternary complex EF-1-alpha/GTP/AAtRNA. The protein is Elongation factor 1-beta of Methanobrevibacter smithii (strain ATCC 35061 / DSM 861 / OCM 144 / PS).